The chain runs to 525 residues: GMP synthase [glutamine-hydrolyzing] (525 aa).

Residues 9–207 (RILILDFGSQ…VRDICQCEAL (199 aa)) enclose the Glutamine amidotransferase type-1 domain. The active-site Nucleophile is Cys-86. Residues His-181 and Glu-183 contribute to the active site. The GMPS ATP-PPase domain occupies 208–400 (WTPAKIIDDA…LGLPYDMLYR (193 aa)). 235-241 (SGGVDSS) is an ATP binding site.

As to quaternary structure, homodimer.

It carries out the reaction XMP + L-glutamine + ATP + H2O = GMP + L-glutamate + AMP + diphosphate + 2 H(+). It participates in purine metabolism; GMP biosynthesis; GMP from XMP (L-Gln route): step 1/1. Catalyzes the synthesis of GMP from XMP. The polypeptide is GMP synthase [glutamine-hydrolyzing] (Shigella flexneri serotype 5b (strain 8401)).